The primary structure comprises 163 residues: Large ribosomal subunit protein uL10 (163 aa).

Belongs to the universal ribosomal protein uL10 family. Part of the ribosomal stalk of the 50S ribosomal subunit. The N-terminus interacts with L11 and the large rRNA to form the base of the stalk. The C-terminus forms an elongated spine to which L12 dimers bind in a sequential fashion forming a multimeric L10(L12)X complex.

In terms of biological role, forms part of the ribosomal stalk, playing a central role in the interaction of the ribosome with GTP-bound translation factors. This Haemophilus influenzae (strain ATCC 51907 / DSM 11121 / KW20 / Rd) protein is Large ribosomal subunit protein uL10 (rplJ).